A 296-amino-acid chain; its full sequence is Chelated iron transport system membrane protein YfeB (296 aa).

Positions 11–246 (LVVDNVTVTY…NLEMTFGGVL (236 aa)) constitute an ABC transporter domain. ATP is bound at residue 44 to 51 (GVNGSGKS). Residues 276–296 (VFYGHTKNDPPAQSQSKEQNS) are disordered. The span at 286 to 296 (PAQSQSKEQNS) shows a compositional bias: polar residues.

This sequence belongs to the ABC transporter superfamily.

Its subcellular location is the cell inner membrane. Part of an ATP-driven transport system YfeABCD for chelated iron. This is Chelated iron transport system membrane protein YfeB (yfeB) from Yersinia pestis.